Reading from the N-terminus, the 306-residue chain is TnpB-like protein aq_aa05 (306 aa).

Residues Cys-213, Cys-216, Cys-234, and Cys-237 each coordinate Zn(2+).

Belongs to the transposase 35 family.

The chain is TnpB-like protein aq_aa05 from Aquifex aeolicus (strain VF5).